Here is a 77-residue protein sequence, read N- to C-terminus: Putative defensin-like protein 162 (77 aa).

Positions 1–27 are cleaved as a signal peptide; that stretch reads MAKQLCSYMFISMFILSAFLALPSAEG. 4 cysteine pairs are disulfide-bonded: cysteine 34/cysteine 77, cysteine 44/cysteine 63, cysteine 49/cysteine 71, and cysteine 53/cysteine 73.

Belongs to the DEFL family.

The protein localises to the secreted. This Arabidopsis thaliana (Mouse-ear cress) protein is Putative defensin-like protein 162 (LCR37).